The primary structure comprises 37 residues: Large ribosomal subunit protein bL36 (37 aa).

The protein belongs to the bacterial ribosomal protein bL36 family.

In Aliarcobacter butzleri (strain RM4018) (Arcobacter butzleri), this protein is Large ribosomal subunit protein bL36.